The primary structure comprises 472 residues: Coronin-6 (472 aa).

WD repeat units lie at residues 23-64 (QAYE…VLPL), 72-111 (KNYPLVTGHTAPVLDIDWCPHNDNVIASASDDTTIMVWQI), 122-161 (EPIITLEGHSKRVGILSWHPTARNVLLSAGGDNVIIIWNV), 165-204 (EVLLSLDDMHPDVIHSVCWNSNGSLLATTCKDKTLRIIDP), 210-251 (VAEQ…LWDP), and 256-296 (EPVA…YFEI). Residues 407–433 (KRNILDVRPPSGPRRSQSASDAPLSQQ) are disordered. Residues 420–433 (RRSQSASDAPLSQQ) are compositionally biased toward polar residues. Residues 430 to 464 (LSQQHTLETLLEEIKALRERVQAQEQRITALENML) adopt a coiled-coil conformation.

This chain is Coronin-6 (CORO6), found in Homo sapiens (Human).